The sequence spans 324 residues: tRNA dimethylallyltransferase (324 aa).

Residue 17–24 (GPTASGKT) participates in ATP binding. 19–24 (TASGKT) lines the substrate pocket. 3 interaction with substrate tRNA regions span residues 42–45 (DSAL), 166–170 (QRIQR), and 251–256 (RCVGYR).

The protein belongs to the IPP transferase family. Monomer. Requires Mg(2+) as cofactor.

It catalyses the reaction adenosine(37) in tRNA + dimethylallyl diphosphate = N(6)-dimethylallyladenosine(37) in tRNA + diphosphate. Functionally, catalyzes the transfer of a dimethylallyl group onto the adenine at position 37 in tRNAs that read codons beginning with uridine, leading to the formation of N6-(dimethylallyl)adenosine (i(6)A). This Burkholderia pseudomallei (strain 668) protein is tRNA dimethylallyltransferase.